The sequence spans 426 residues: Glutamate-1-semialdehyde 2,1-aminomutase (426 aa).

Lysine 265 carries the N6-(pyridoxal phosphate)lysine modification.

The protein belongs to the class-III pyridoxal-phosphate-dependent aminotransferase family. HemL subfamily. As to quaternary structure, homodimer. It depends on pyridoxal 5'-phosphate as a cofactor.

Its subcellular location is the cytoplasm. The catalysed reaction is (S)-4-amino-5-oxopentanoate = 5-aminolevulinate. It functions in the pathway porphyrin-containing compound metabolism; protoporphyrin-IX biosynthesis; 5-aminolevulinate from L-glutamyl-tRNA(Glu): step 2/2. The sequence is that of Glutamate-1-semialdehyde 2,1-aminomutase from Pectobacterium carotovorum subsp. carotovorum (strain PC1).